The chain runs to 556 residues: Formate--tetrahydrofolate ligase (556 aa).

Position 65 to 72 (65 to 72 (TPAGEGKS)) interacts with ATP.

The protein belongs to the formate--tetrahydrofolate ligase family.

The catalysed reaction is (6S)-5,6,7,8-tetrahydrofolate + formate + ATP = (6R)-10-formyltetrahydrofolate + ADP + phosphate. It functions in the pathway one-carbon metabolism; tetrahydrofolate interconversion. This is Formate--tetrahydrofolate ligase from Streptococcus equi subsp. equi (strain 4047).